A 28-amino-acid chain; its full sequence is Venom protein (28 aa).

Residues 1–28 (KEGYPDGQNGKKIPCAINDNISKTXEQA) are disordered. Residues 19 to 28 (DNISKTXEQA) are compositionally biased toward polar residues.

Expressed by the venom gland.

It localises to the secreted. Causes symptoms of mild intoxication and transient paralysis in insects (A.domestica). This is Venom protein from Rhopalurus junceus (Caribbean blue scorpion).